A 323-amino-acid polypeptide reads, in one-letter code: Galactosylgalactosylxylosylprotein 3-beta-glucuronosyltransferase 2 (323 aa).

Residues 1–2 (MK) lie on the Cytoplasmic side of the membrane. A helical; Signal-anchor for type II membrane protein transmembrane segment spans residues 3–23 (SALFTRFFILLPWILIVIIML). At 24-323 (DVDTRRPVPP…YHLDTVKIEV (300 aa)) the chain is on the lumenal side. The segment at 51-80 (RLPLRRGGPAHGTQKRNQSRPQPQPEPQLP) is disordered. A glycan (N-linked (GlcNAc...) asparagine) is linked at N67. UDP-alpha-D-glucuronate contacts are provided by residues 87-89 (PTY), D118, R155, R160, and 185-187 (DDD). Mn(2+) is bound at residue D187. Residues 234–243 (WRADRPFAID) form an interaction with galactose moiety of substrate glycoprotein region. E273 functions as the Proton donor/acceptor in the catalytic mechanism. N292 carries N-linked (GlcNAc...) asparagine glycosylation. 300–302 (HTR) contacts UDP-alpha-D-glucuronate.

It belongs to the glycosyltransferase 43 family. As to quaternary structure, homodimer. Requires Mn(2+) as cofactor. Expressed in the trachea, retina, spinal cord, hippocampus and other brain regions, and, at lower levels, in testis and ovary.

The protein localises to the golgi apparatus membrane. The enzyme catalyses 3-O-(beta-D-galactosyl-(1-&gt;3)-beta-D-galactosyl-(1-&gt;4)-beta-D-xylosyl)-L-seryl-[protein] + UDP-alpha-D-glucuronate = 3-O-(beta-D-GlcA-(1-&gt;3)-beta-D-Gal-(1-&gt;3)-beta-D-Gal-(1-&gt;4)-beta-D-Xyl)-L-seryl-[protein] + UDP + H(+). It functions in the pathway protein modification; protein glycosylation. In terms of biological role, involved in the biosynthesis of L2/HNK-1 carbohydrate epitope on both glycolipids and glycoproteins. In Homo sapiens (Human), this protein is Galactosylgalactosylxylosylprotein 3-beta-glucuronosyltransferase 2 (B3GAT2).